The primary structure comprises 330 residues: Autoinducer 2 import system permease protein LsrD (330 aa).

Over 1–4 (MRIR) the chain is Cytoplasmic. The chain crosses the membrane as a helical span at residues 5–25 (YGWELALAALLVIEIVAFGAI). The Periplasmic segment spans residues 26-42 (NPRMLDLNMLLFSTSDF). The helical transmembrane segment at 43 to 63 (ICIGIVALPLTMVIVSGGIDI) threads the bilayer. Residues 64–67 (SFGS) are Cytoplasmic-facing. 2 consecutive transmembrane segments (helical) span residues 68-88 (TIGLCAIALGVLFQSGVPMPL) and 89-109 (AILLTLLLGALCGLINAGLII). The Cytoplasmic portion of the chain corresponds to 110–115 (YTKVNP). The chain crosses the membrane as a helical span at residues 116–136 (LVITLGTLYLFAGSALLLSGM). Over 137–159 (AGATGYEGIGGFPMAFTDFANLD) the chain is Periplasmic. A helical membrane pass occupies residues 160–180 (VLGLPVPLIIFLICLLVFWLW). Residues 181 to 209 (LHKTHAGRNVFLIGQSPRVALYSAIPVNR) are Cytoplasmic-facing. Residues 210–230 (TLCALYAMTGLASAVAAVLLV) form a helical membrane-spanning segment. Over 231 to 237 (SYFGSAR) the chain is Periplasmic. Helical transmembrane passes span 238 to 258 (SDLGASFLMPAITAVVLGGAN) and 259 to 279 (IYGGSGSIIGTAIAVLLVGYL). Residues 280-285 (QQGLQM) are Periplasmic-facing. Residues 286–306 (AGVPNQVSSALSGALLIVVVV) form a helical membrane-spanning segment. The Cytoplasmic portion of the chain corresponds to 307–330 (GRSVSLHRQQIKEWLARRANNPLP).

This sequence belongs to the binding-protein-dependent transport system permease family. AraH/RbsC subfamily. In terms of assembly, the complex is composed of two ATP-binding proteins (LsrA), two transmembrane proteins (LsrC and LsrD) and a solute-binding protein (LsrB).

Its subcellular location is the cell inner membrane. Functionally, part of the ABC transporter complex LsrABCD involved in autoinducer 2 (AI-2) import. Probably responsible for the translocation of the substrate across the membrane. In Shigella flexneri serotype 5b (strain 8401), this protein is Autoinducer 2 import system permease protein LsrD (lsrD).